The sequence spans 159 residues: Growth arrest and DNA damage-inducible protein GADD45 gamma (159 aa).

A homodimerization region spans residues 43 to 86 (VYESAKVLNVDPDNVTFCVLAADEEDEGDIALQIHFTLIQAFCC).

The protein belongs to the GADD45 family. As to quaternary structure, undergoes concentration-dependent homodimerization, which is required for growth inhibititory activity and enhances interaction with PCNA. Interacts with GADD45GIP1. Interacts with PCNA.

Its function is as follows. Involved in the regulation of growth and apoptosis. Mediates activation of stress-responsive MTK1/MEKK4 MAPKKK. This Bos taurus (Bovine) protein is Growth arrest and DNA damage-inducible protein GADD45 gamma (GADD45G).